Consider the following 694-residue polypeptide: Frizzled-8 (694 aa).

The N-terminal stretch at 1–27 (MEWGYLLEVTSLLAALALLQRSSGAAA) is a signal peptide. At 28–275 (ASAKELACQE…NPFFSQDERA (248 aa)) the chain is on the extracellular side. Residues 30-151 (AKELACQEIT…GNPDTLCMDY (122 aa)) form the FZ domain. Disulfide bonds link Cys-35–Cys-96, Cys-43–Cys-89, Cys-80–Cys-118, Cys-107–Cys-148, and Cys-111–Cys-135. Asn-49 is a glycosylation site (N-linked (GlcNAc...) asparagine). 71 to 78 (QFWPLVEI) serves as a coordination point for hexadecanoate. The segment at 95–100 (ICLEDY) is wnt-binding. The tract at residues 147-152 (LCMDYN) is wnt-binding. The N-linked (GlcNAc...) asparagine glycan is linked to Asn-152. The tract at residues 155–226 (DLTTAAPSPP…KARPPGGGAA (72 aa)) is disordered. Over residues 161-175 (PSPPRRLPPPPPGEQ) the composition is skewed to pro residues. The segment covering 176–186 (PPSGSGHGRPP) has biased composition (low complexity). Over residues 210–225 (RGGGGGGKARPPGGGA) the composition is skewed to gly residues. A helical transmembrane segment spans residues 276–296 (FTVFWIGLWSVLCFVSTFATV). Over 297-312 (STFLIDMERFKYPERP) the chain is Cytoplasmic. A helical transmembrane segment spans residues 313-333 (IIFLSACYLFVSVGYLVRLVA). Topologically, residues 334–396 (GHEKVACSGG…RYETTGPALC (63 aa)) are extracellular. Residues 397-417 (TVVFLLVYFFGMASSIWWVIL) form a helical membrane-spanning segment. At 418–439 (SLTWFLAAGMKWGNEAIAGYSQ) the chain is on the cytoplasmic side. The chain crosses the membrane as a helical span at residues 440 to 460 (YFHLAAWLVPSVKSIAVLALS). Residues 461-483 (SVDGDPVAGICYVGNQSLDNLRG) are Extracellular-facing. Asn-475 carries an N-linked (GlcNAc...) asparagine glycan. The chain crosses the membrane as a helical span at residues 484 to 504 (FVLAPLVIYLFIGTMFLLAGF). At 505 to 532 (VSLFRIRSVIKQQDGPTKTHKLEKLMIR) the chain is on the cytoplasmic side. The helical transmembrane segment at 533–553 (LGLFTVLYTVPAAVVVACLFY) threads the bilayer. The Extracellular segment spans residues 554-584 (EQHNRPRWEATHNCPCLRDLQPDQARRPDYA). Residues 585 to 605 (VFMLKYFMCLVVGITSGVWVW) traverse the membrane as a helical segment. The Cytoplasmic portion of the chain corresponds to 606–694 (SGKTLESWRS…YPKQMPLSQV (89 aa)). A Lys-Thr-X-X-X-Trp motif, mediates interaction with the PDZ domain of Dvl family members motif is present at residues 608–613 (KTLESW). A compositionally biased stretch (gly residues) spans 648-664 (GGGGPGGGGGPGGGGGS). The segment at 648 to 668 (GGGGPGGGGGPGGGGGSLYSD) is disordered. A PDZ-binding motif is present at residues 692–694 (SQV).

This sequence belongs to the G-protein coupled receptor Fz/Smo family. In terms of assembly, component of a Wnt-signaling complex that contains a WNT protein, a FZD protein and LRP5 or LRP6. Interacts directly with LRP5 or LRP6; the interaction is promoted by Wnt-binding and signaling and inhibited by DKK1. Interacts with GPOC, RSPO1 and RSPO3. Interacts with glypican GPC3. Ubiquitinated by ZNRF3, leading to its degradation by the proteasome. Most abundant in fetal kidney, followed by brain and lung. In adult tissues, expressed in kidney, heart, pancreas and skeletal muscle.

The protein localises to the membrane. Its subcellular location is the golgi apparatus. It is found in the cell membrane. In terms of biological role, receptor for Wnt proteins. Component of the Wnt-Fzd-LRP5-LRP6 complex that triggers beta-catenin signaling through inducing aggregation of receptor-ligand complexes into ribosome-sized signalosomes. The beta-catenin canonical signaling pathway leads to the activation of disheveled proteins, inhibition of GSK-3 kinase, nuclear accumulation of beta-catenin and activation of Wnt target genes. A second signaling pathway involving PKC and calcium fluxes has been seen for some family members, but it is not yet clear if it represents a distinct pathway or if it can be integrated in the canonical pathway, as PKC seems to be required for Wnt-mediated inactivation of GSK-3 kinase. Both pathways seem to involve interactions with G-proteins. May be involved in transduction and intercellular transmission of polarity information during tissue morphogenesis and/or in differentiated tissues. Coreceptor along with RYK of Wnt proteins, such as WNT1. In Homo sapiens (Human), this protein is Frizzled-8 (FZD8).